A 381-amino-acid chain; its full sequence is L-lactate dehydrogenase A-like 6B (381 aa).

Residues 101–106 and R148 contribute to the NAD(+) site; that span reads DLDEDK. The substrate site is built by R155, N187, and R218. N187 contributes to the NAD(+) binding site. Catalysis depends on H242, which acts as the Proton acceptor. A substrate-binding site is contributed by T297.

Belongs to the LDH/MDH superfamily. LDH family. In terms of tissue distribution, testis specific.

It carries out the reaction (S)-lactate + NAD(+) = pyruvate + NADH + H(+). Its pathway is fermentation; pyruvate fermentation to lactate; (S)-lactate from pyruvate: step 1/1. The polypeptide is L-lactate dehydrogenase A-like 6B (LDHAL6B) (Homo sapiens (Human)).